The chain runs to 121 residues: UPF0145 protein SAV_4658 (121 aa).

The protein belongs to the UPF0145 family.

This chain is UPF0145 protein SAV_4658, found in Streptomyces avermitilis (strain ATCC 31267 / DSM 46492 / JCM 5070 / NBRC 14893 / NCIMB 12804 / NRRL 8165 / MA-4680).